The chain runs to 243 residues: MILGIDVGSTTTKMVLMEDSKIIWYKIEDIGVVIEEDILLKMVKEIEQKYPIDKIVATGYGRHKVSFADKIVPEVIALGKGANYFFNEADGVIDIGGQDTKVLKIDKNGKVVDFILSDKCAAGTGKFLEKALDILKIDKNEINKYKSDNIAKISSMCAVFAESEIISLLSKKVPKEGILMGVYESIINRVIPMTNRLKIQNIVFSGGVAKNKVLVEMFEKKLNKKLLIPKEPQIVCCVGAILV.

Positions 120 and 157 each coordinate [4Fe-4S] cluster.

Homodimer. It depends on [4Fe-4S] cluster as a cofactor.

This is an uncharacterized protein from Methanocaldococcus jannaschii (strain ATCC 43067 / DSM 2661 / JAL-1 / JCM 10045 / NBRC 100440) (Methanococcus jannaschii).